The following is a 176-amino-acid chain: Lipoprotein signal peptidase (176 aa).

The next 4 helical transmembrane spans lie at 26–46 (LWLAFALLVVLLDQFFKIVIV), 57–77 (VTGFFNLVLVYNKGAAFSFLA), 82–102 (WQRWFFTGLGVVVGAFIVWLL), and 111–131 (FCFAVSLILGGAVGNVVDRVI). Residues Asp-137 and Asp-155 contribute to the active site. A helical membrane pass occupies residues 147–167 (HWPAFNVADCAITVGAVLLIV).

The protein belongs to the peptidase A8 family.

Its subcellular location is the cell inner membrane. It carries out the reaction Release of signal peptides from bacterial membrane prolipoproteins. Hydrolyzes -Xaa-Yaa-Zaa-|-(S,diacylglyceryl)Cys-, in which Xaa is hydrophobic (preferably Leu), and Yaa (Ala or Ser) and Zaa (Gly or Ala) have small, neutral side chains.. It participates in protein modification; lipoprotein biosynthesis (signal peptide cleavage). Functionally, this protein specifically catalyzes the removal of signal peptides from prolipoproteins. The polypeptide is Lipoprotein signal peptidase (Cupriavidus taiwanensis (strain DSM 17343 / BCRC 17206 / CCUG 44338 / CIP 107171 / LMG 19424 / R1) (Ralstonia taiwanensis (strain LMG 19424))).